The primary structure comprises 133 residues: Endoribonuclease YbeY (133 aa).

Zn(2+) is bound by residues histidine 105, histidine 109, and histidine 115.

The protein belongs to the endoribonuclease YbeY family. The cofactor is Zn(2+).

It is found in the cytoplasm. In terms of biological role, single strand-specific metallo-endoribonuclease involved in late-stage 70S ribosome quality control and in maturation of the 3' terminus of the 16S rRNA. This Lawsonia intracellularis (strain PHE/MN1-00) protein is Endoribonuclease YbeY.